The following is a 1036-amino-acid chain: Isoleucine--tRNA ligase (1036 aa).

Positions 46-56 (PFATGLPHYGH) match the 'HIGH' region motif. Positions 589-593 (KMSKR) match the 'KMSKS' region motif. Lys-592 contributes to the ATP binding site.

This sequence belongs to the class-I aminoacyl-tRNA synthetase family. IleS type 2 subfamily. In terms of assembly, monomer. The cofactor is Zn(2+).

Its subcellular location is the cytoplasm. It catalyses the reaction tRNA(Ile) + L-isoleucine + ATP = L-isoleucyl-tRNA(Ile) + AMP + diphosphate. Its function is as follows. Catalyzes the attachment of isoleucine to tRNA(Ile). As IleRS can inadvertently accommodate and process structurally similar amino acids such as valine, to avoid such errors it has two additional distinct tRNA(Ile)-dependent editing activities. One activity is designated as 'pretransfer' editing and involves the hydrolysis of activated Val-AMP. The other activity is designated 'posttransfer' editing and involves deacylation of mischarged Val-tRNA(Ile). The sequence is that of Isoleucine--tRNA ligase from Chlamydia trachomatis serovar A (strain ATCC VR-571B / DSM 19440 / HAR-13).